The following is a 490-amino-acid chain: Pre-glycoprotein polyprotein GP complex (490 aa).

The N-myristoyl glycine; by host moiety is linked to residue Gly-2. Over Gly-2–Glu-17 the chain is Extracellular. The helical transmembrane segment at Val-18–Lys-33 threads the bilayer. The Cytoplasmic portion of the chain corresponds to Gly-34 to Ser-58. Zn(2+) is bound at residue Cys-57. At Leu-59 to Asp-431 the chain is on the extracellular side. 6 N-linked (GlcNAc...) asparagine; by host glycosylation sites follow: Asn-78, Asn-88, Asn-98, Asn-108, Asn-118, and Asn-166. Disulfide bonds link Cys-85–Cys-230, Cys-117–Cys-154, Cys-179–Cys-211, Cys-278–Cys-291, Cys-300–Cys-309, and Cys-363–Cys-384. An N-linked (GlcNAc...) asparagine; by host glycan is attached at Asn-223. N-linked (GlcNAc...) asparagine; by host glycosylation is found at Asn-364, Asn-372, Asn-389, and Asn-394. Residues Leu-432 to Pro-452 form a helical membrane-spanning segment. Residues Thr-453–Arg-490 lie on the Cytoplasmic side of the membrane. 6 residues coordinate Zn(2+): His-454, His-456, Cys-462, His-466, Cys-474, and Cys-476.

Belongs to the arenaviridae GPC protein family. In terms of assembly, interacts with glycoprotein G2. Part of the GP complex (GP-C) together with glycoprotein G1 and glycoprotein G2. The GP-complex interacts with protein Z, which interacts with ribonucleocapsid; these interactions may induce virion budding. As to quaternary structure, homotrimer; disulfide-linked. In pre-fusion state, G1 homotrimers bind G2 homotrimers via ionic interactions. Part of the GP complex (GP-C) together with glycoprotein G2 and the stable signal peptide. Interacts with the primary host receptor DAG1 on the cell surface; this interaction occurs at pH 8.0 but not at pH 6.0 and below. Upon virus internalization and at endosomal pH, interacts with the host lysosomal protein LAMP1; this interaction mediates G1 dissociation from GP-C and membrane fusion. The GP-complex interacts with protein Z, which interacts with ribonucleocapsid; these interactions may induce virion budding. Homotrimer. Interacts with the stable signal peptide. In pre-fusion state, G2 homotrimers bind G1 homotrimers via ionic interactions. Part of the GP complex (GP-C) together with glycoprotein G1 and the stable signal peptide. Acidification in the endosome triggers rearrangements, which ultimately leads to a 6 helix bundle formed by the two heptad repeat domains (HR1 and HR2) in post-fusion state. The GP-complex interacts with protein Z, which interacts with ribonucleocapsid; these interactions may induce virion budding. In terms of processing, specific enzymatic cleavages in vivo yield mature proteins. GP-C polyprotein is cleaved in the endoplasmic reticulum by the host protease MBTPS1. Only cleaved glycoprotein is incorporated into virions. The SSP remains stably associated with the GP complex following cleavage by signal peptidase and plays crucial roles in the trafficking of GP through the secretory pathway. Post-translationally, myristoylation is necessary for GP2-mediated fusion activity.

Its subcellular location is the virion membrane. It localises to the host endoplasmic reticulum membrane. The protein resides in the host Golgi apparatus membrane. It is found in the host cell membrane. Functionally, functions as a cleaved signal peptide that is retained as the third component of the GP complex (GP-C). Helps to stabilize the spike complex in its native conformation. The SSP is required for efficient glycoprotein expression, post-translational maturation cleavage of G1 and G2, glycoprotein transport to the cell surface plasma membrane, formation of infectious virus particles, and acid pH-dependent glycoprotein-mediated cell fusion. Forms the virion spikes together with glycoprotein G2. The glycoprotein spike trimers are connected to the underlying matrix. Interacts with the host receptor. Mediates virus attachment to the host primary receptor alpha-dystroglycan DAG1 (alpha-DG) at the cell surface. This attachment induces virion internalization apparently through macropinocytosis. Following endocytosis, there is a pH-dependent switch from binding DAG1 to the host lysosomal receptor LAMP1. This latter binding triggers the dissociation of GP1, exposing the fusion subunit, GP2, such that fusion can occur. Down-modulates host DAG1. In terms of biological role, forms the virion spikes together with glycoprotein G1. The glycoprotein spike trimers are connected to the underlying matrix. Class I viral fusion protein that directs fusion of viral and host endosomal membranes, leading to delivery of the nucleocapsid into the cytoplasm. Membrane fusion is mediated by irreversible conformational changes induced by acidification. This is Pre-glycoprotein polyprotein GP complex from Lassa virus (strain GA391) (LASV).